The chain runs to 261 residues: MARKPLIAGNWKMNLNHFEAIALVQKIAFSLPDKYFDKVDVTVIPPFTDLRSVQTLVDGDKLRLSYGAQDVSQHDSGAYTGEISGAFLAKLGCSFAVVGHSERRTYHHEDDALVAAKAAAAFRHGITPIVCIGEHLKVREAGNHVEHNVEQLRGSLAGLTSEQIGQAVIAYEPVWAIGTGRVAGAADAQEVCKAIRDELGKLSSPQLAAGIRVLYGGSVNAKNVGEIVAQEDVDGALVGGASLDGEQFATLSAIAAGGPLP.

10–12 (NWK) serves as a coordination point for substrate. Residue H100 is the Electrophile of the active site. Residue E172 is the Proton acceptor of the active site. Residues G178, S218, and 239-240 (GG) each bind substrate.

The protein belongs to the triosephosphate isomerase family. In terms of assembly, homodimer.

The protein resides in the cytoplasm. It carries out the reaction D-glyceraldehyde 3-phosphate = dihydroxyacetone phosphate. The protein operates within carbohydrate biosynthesis; gluconeogenesis. It participates in carbohydrate degradation; glycolysis; D-glyceraldehyde 3-phosphate from glycerone phosphate: step 1/1. Involved in the gluconeogenesis. Catalyzes stereospecifically the conversion of dihydroxyacetone phosphate (DHAP) to D-glyceraldehyde-3-phosphate (G3P). In Mycobacterium sp. (strain JLS), this protein is Triosephosphate isomerase.